The primary structure comprises 435 residues: C4-dicarboxylate transport protein (435 aa).

A run of 9 helical transmembrane segments spans residues serine 4–glycine 24, leucine 44–methionine 64, valine 76–valine 96, isoleucine 142–phenylalanine 162, valine 184–methionine 204, leucine 222–alanine 242, valine 289–leucine 309, isoleucine 326–valine 346, and isoleucine 352–isoleucine 372.

Belongs to the dicarboxylate/amino acid:cation symporter (DAACS) (TC 2.A.23) family.

It localises to the cell inner membrane. Responsible for the transport of dicarboxylates such as succinate, fumarate, and malate from the periplasm across the membrane. The chain is C4-dicarboxylate transport protein from Salmonella paratyphi A (strain ATCC 9150 / SARB42).